Reading from the N-terminus, the 218-residue chain is Cytochrome b6 (218 aa).

Residues I35–F55 traverse the membrane as a helical segment. C38 is a heme c binding site. H89 and H103 together coordinate heme b. A run of 3 helical transmembrane segments spans residues A93–F113, L119–Y139, and L189–I209. H190 and H205 together coordinate heme b.

This sequence belongs to the cytochrome b family. PetB subfamily. In terms of assembly, the 4 large subunits of the cytochrome b6-f complex are cytochrome b6, subunit IV (17 kDa polypeptide, PetD), cytochrome f and the Rieske protein, while the 4 small subunits are PetG, PetL, PetM and PetN. The complex functions as a dimer. It depends on heme b as a cofactor. Heme c is required as a cofactor.

The protein resides in the cellular thylakoid membrane. Its function is as follows. Component of the cytochrome b6-f complex, which mediates electron transfer between photosystem II (PSII) and photosystem I (PSI), cyclic electron flow around PSI, and state transitions. The chain is Cytochrome b6 from Synechococcus sp. (strain RCC307).